A 492-amino-acid chain; its full sequence is Bifunctional purine biosynthesis protein PurH (492 aa).

One can recognise an MGS-like domain in the interval 1–144; it reads MKKAILSVSN…KNYKHVTTIV (144 aa).

It belongs to the PurH family.

The catalysed reaction is (6R)-10-formyltetrahydrofolate + 5-amino-1-(5-phospho-beta-D-ribosyl)imidazole-4-carboxamide = 5-formamido-1-(5-phospho-D-ribosyl)imidazole-4-carboxamide + (6S)-5,6,7,8-tetrahydrofolate. It catalyses the reaction IMP + H2O = 5-formamido-1-(5-phospho-D-ribosyl)imidazole-4-carboxamide. It functions in the pathway purine metabolism; IMP biosynthesis via de novo pathway; 5-formamido-1-(5-phospho-D-ribosyl)imidazole-4-carboxamide from 5-amino-1-(5-phospho-D-ribosyl)imidazole-4-carboxamide (10-formyl THF route): step 1/1. Its pathway is purine metabolism; IMP biosynthesis via de novo pathway; IMP from 5-formamido-1-(5-phospho-D-ribosyl)imidazole-4-carboxamide: step 1/1. The chain is Bifunctional purine biosynthesis protein PurH from Staphylococcus aureus (strain USA300).